The chain runs to 235 residues: Carboxy-S-adenosyl-L-methionine synthase (235 aa).

Residues Tyr-35, 60-62 (GCS), 84-85 (DN), 110-111 (DI), Asn-125, and Arg-192 each bind S-adenosyl-L-methionine.

This sequence belongs to the class I-like SAM-binding methyltransferase superfamily. Cx-SAM synthase family. As to quaternary structure, homodimer.

The catalysed reaction is prephenate + S-adenosyl-L-methionine = carboxy-S-adenosyl-L-methionine + 3-phenylpyruvate + H2O. In terms of biological role, catalyzes the conversion of S-adenosyl-L-methionine (SAM) to carboxy-S-adenosyl-L-methionine (Cx-SAM). The chain is Carboxy-S-adenosyl-L-methionine synthase from Sulfurimonas denitrificans (strain ATCC 33889 / DSM 1251) (Thiomicrospira denitrificans (strain ATCC 33889 / DSM 1251)).